Consider the following 531-residue polypeptide: UDP-glucuronosyltransferase 1A6 (531 aa).

The first 26 residues, Met1–Gly26, serve as a signal peptide directing secretion. N-linked (GlcNAc...) asparagine glycans are attached at residues Asn293 and Asn431. Residues Val489–Phe505 form a helical membrane-spanning segment.

The protein belongs to the UDP-glycosyltransferase family. In terms of tissue distribution, expressed in liver, kidney and at very low levels in colon.

The protein resides in the microsome. Its subcellular location is the endoplasmic reticulum membrane. It catalyses the reaction glucuronate acceptor + UDP-alpha-D-glucuronate = acceptor beta-D-glucuronoside + UDP + H(+). The catalysed reaction is (5Z,8Z,11Z,14Z)-eicosatetraenoate + UDP-alpha-D-glucuronate = O-[(5Z),(8Z),(11Z),(14Z)-eicosatetraenoyl]-beta-D-glucuronate + UDP. The enzyme catalyses 15-hydroxy-(5Z,8Z,11Z,13E)-eicosatetraenoate + UDP-alpha-D-glucuronate = 15-O-(beta-D-glucuronosyl)-(5Z,8Z,11Z,14Z)-eicosatetraenoate + UDP + H(+). It carries out the reaction (E)-ferulate + UDP-alpha-D-glucuronate = (E)-4-O-(beta-D-glucuronosyl)-ferulate + UDP + H(+). It catalyses the reaction (E)-ferulate + UDP-alpha-D-glucuronate = (E)-ferulic acid beta-D-glucuronate ester + UDP. Functionally, UDP-glucuronosyltransferase (UGT) that catalyzes phase II biotransformation reactions in which lipophilic substrates are conjugated with glucuronic acid to facilitate their inactivation and excretion from the body. Essential for the elimination and detoxification of drugs, xenobiotics and endogenous compounds. Involved in the glucuronidation of arachidonic acid (AA) and AA-derived eicosanoids including 15-HETE and 20-HETE. Conjugates small planar phenolic molecules such as 4-nitrophenol, 1-naphthol, and 4-methylumbelliferone. The bulky phenol 4-hydroxybiphenyl, androgens and estrogens are not substrates. 2-hydroxybiphenyl is an excellent substrate. Involved in the glucuronidation of the phytochemical ferulic acid at the phenolic or the carboxylic acid group. This Mus musculus (Mouse) protein is UDP-glucuronosyltransferase 1A6.